The chain runs to 361 residues: MAMLVDPPNGIRQEGKHYYTMWQTLFEIDTKYVPIKPIGRGAYGVVCSSINSETNERVAIKKIHNVFENRIDALRTLRELKLLRHVRHENVISLKDVMLPTHRYSFRDVYLVYELMDSDLNQIIKSSQSLSDDHCKYFLFQLLRGLKYLHSANILHRDLKPGNLLVNANCDLKICDFGLARTYEQFMTEYVVTRWYRAPELLLCCDNYGTSIDVWSVGCIFAEILGRKPIFPGTECLNQLKLIINVVGSQQDWDLQFIDNQKARRFIKSLPFSKGTHFSHIYPHANPLAIDLLQRMLVFDPTKRISVSDALLHPYMEGLLEPECNPSENVPVSSLEIDENMEGDMIREMMWEEMLHYLPRA.

The region spanning 32-316 is the Protein kinase domain; that stretch reads YVPIKPIGRG…VSDALLHPYM (285 aa). ATP-binding positions include 38 to 46 and Lys61; that span reads IGRGAYGVV. The active-site Proton acceptor is Asp158. At Thr188 the chain carries Phosphothreonine. Positions 188-190 match the TXY motif; that stretch reads TEY. Tyr190 is subject to Phosphotyrosine. A Phosphothreonine modification is found at Thr193.

The protein belongs to the protein kinase superfamily. CMGC Ser/Thr protein kinase family. MAP kinase subfamily. In terms of assembly, interacts with MKK3. In terms of processing, dually phosphorylated on Thr-188 and Tyr-190, which activates the enzyme.

The enzyme catalyses L-seryl-[protein] + ATP = O-phospho-L-seryl-[protein] + ADP + H(+). The catalysed reaction is L-threonyl-[protein] + ATP = O-phospho-L-threonyl-[protein] + ADP + H(+). Activated by threonine and tyrosine phosphorylation. The polypeptide is Mitogen-activated protein kinase 14 (MPK14) (Arabidopsis thaliana (Mouse-ear cress)).